Consider the following 116-residue polypeptide: Large ribosomal subunit protein bL19 (116 aa).

It belongs to the bacterial ribosomal protein bL19 family.

Functionally, this protein is located at the 30S-50S ribosomal subunit interface and may play a role in the structure and function of the aminoacyl-tRNA binding site. The chain is Large ribosomal subunit protein bL19 from Pseudothermotoga lettingae (strain ATCC BAA-301 / DSM 14385 / NBRC 107922 / TMO) (Thermotoga lettingae).